Here is a 431-residue protein sequence, read N- to C-terminus: ETS domain-containing protein Elk-4 (431 aa).

The ETS DNA-binding region spans 5–85 (ITLWQFLLQL…NGQKFVYKFV (81 aa)). Residues 114 to 139 (SSSSKDVENGGKDKPPQPGAKTSSRN) are disordered. Basic and acidic residues predominate over residues 118–128 (KDVENGGKDKP). Residue Lys-167 forms a Glycyl lysine isopeptide (Lys-Gly) (interchain with G-Cter in SUMO2) linkage. Ser-180 bears the Phosphoserine mark. Disordered stretches follow at residues 251-282 (TTPP…DTDI), 294-323 (ENLS…KKPK), and 411-431 (TLSG…LQKT). Residues 261–273 (LQEPPRTPSPPLS) are compositionally biased toward pro residues. The segment covering 299 to 313 (EPKDQDSVLLEKDKV) has biased composition (basic and acidic residues).

This sequence belongs to the ETS family. In terms of assembly, interacts with SIRT7.

It is found in the nucleus. In terms of biological role, involved in both transcriptional activation and repression. Interaction with SIRT7 leads to recruitment and stabilization of SIRT7 at promoters, followed by deacetylation of histone H3 at 'Lys-18' (H3K18Ac) and subsequent transcription repression. Forms a ternary complex with the serum response factor (SRF). Requires DNA-bound SRF for ternary complex formation and makes extensive DNA contacts to the 5'side of SRF, but does not bind DNA autonomously. This chain is ETS domain-containing protein Elk-4 (ELK4), found in Homo sapiens (Human).